The primary structure comprises 357 residues: UDP-N-acetylglucosamine--N-acetylmuramyl-(pentapeptide) pyrophosphoryl-undecaprenol N-acetylglucosamine transferase (357 aa).

Residues 14–16 (TAG), R168, S198, and Q292 each bind UDP-N-acetyl-alpha-D-glucosamine.

It belongs to the glycosyltransferase 28 family. MurG subfamily.

Its subcellular location is the cell membrane. It catalyses the reaction di-trans,octa-cis-undecaprenyl diphospho-N-acetyl-alpha-D-muramoyl-L-alanyl-D-glutamyl-meso-2,6-diaminopimeloyl-D-alanyl-D-alanine + UDP-N-acetyl-alpha-D-glucosamine = di-trans,octa-cis-undecaprenyl diphospho-[N-acetyl-alpha-D-glucosaminyl-(1-&gt;4)]-N-acetyl-alpha-D-muramoyl-L-alanyl-D-glutamyl-meso-2,6-diaminopimeloyl-D-alanyl-D-alanine + UDP + H(+). It functions in the pathway cell wall biogenesis; peptidoglycan biosynthesis. In terms of biological role, cell wall formation. Catalyzes the transfer of a GlcNAc subunit on undecaprenyl-pyrophosphoryl-MurNAc-pentapeptide (lipid intermediate I) to form undecaprenyl-pyrophosphoryl-MurNAc-(pentapeptide)GlcNAc (lipid intermediate II). This is UDP-N-acetylglucosamine--N-acetylmuramyl-(pentapeptide) pyrophosphoryl-undecaprenol N-acetylglucosamine transferase from Oceanobacillus iheyensis (strain DSM 14371 / CIP 107618 / JCM 11309 / KCTC 3954 / HTE831).